The primary structure comprises 263 residues: Oxidoreductase UcpA (263 aa).

10-32 (LITGALQGIGEGIARTFARHGAN) contributes to the NAD(+) binding site. Serine 141 provides a ligand contact to substrate. Tyrosine 155 functions as the Proton acceptor in the catalytic mechanism.

This sequence belongs to the short-chain dehydrogenases/reductases (SDR) family.

In Escherichia coli O157:H7, this protein is Oxidoreductase UcpA (ucpA).